Here is a 70-residue protein sequence, read N- to C-terminus: Omega-conotoxin-like Bu1 (70 aa).

The signal sequence occupies residues 1–22 (MKLTCVAIVAVLLLTACQLITA). Residues 23–45 (EDSRGTQLHRALRKTTKLSVSTR) constitute a propeptide that is removed on maturation. Disulfide bonds link C46/C61, C53/C65, and C60/C70.

It belongs to the conotoxin O1 superfamily. In terms of tissue distribution, expressed by the venom duct.

It localises to the secreted. Its function is as follows. Omega-conotoxins act at presynaptic membranes, they bind and block voltage-gated calcium channels (Cav). This Conus bullatus (Bubble cone) protein is Omega-conotoxin-like Bu1.